We begin with the raw amino-acid sequence, 363 residues long: Biotin synthase (363 aa).

The Radical SAM core domain maps to 38 to 266 (NTVQVSTLLS…ETQVRLSAGR (229 aa)). [4Fe-4S] cluster is bound by residues C53, C57, and C60. 4 residues coordinate [2Fe-2S] cluster: C97, C129, C189, and R261. Residues 315 to 363 (KAFEKKSQPESVAAEKSKYQSQGEKPRWSRPEHKIDRNLEAQQNAKTKA) form a disordered region. Over residues 316 to 353 (AFEKKSQPESVAAEKSKYQSQGEKPRWSRPEHKIDRNL) the composition is skewed to basic and acidic residues. Positions 354-363 (EAQQNAKTKA) are enriched in polar residues.

Belongs to the radical SAM superfamily. Biotin synthase family. In terms of assembly, homodimer. [4Fe-4S] cluster is required as a cofactor. The cofactor is [2Fe-2S] cluster.

The enzyme catalyses (4R,5S)-dethiobiotin + (sulfur carrier)-SH + 2 reduced [2Fe-2S]-[ferredoxin] + 2 S-adenosyl-L-methionine = (sulfur carrier)-H + biotin + 2 5'-deoxyadenosine + 2 L-methionine + 2 oxidized [2Fe-2S]-[ferredoxin]. The protein operates within cofactor biosynthesis; biotin biosynthesis; biotin from 7,8-diaminononanoate: step 2/2. Functionally, catalyzes the conversion of dethiobiotin (DTB) to biotin by the insertion of a sulfur atom into dethiobiotin via a radical-based mechanism. The chain is Biotin synthase from Christiangramia forsetii (strain DSM 17595 / CGMCC 1.15422 / KT0803) (Gramella forsetii).